Here is a 237-residue protein sequence, read N- to C-terminus: Phosphoribosylaminoimidazole-succinocarboxamide synthase (237 aa).

It belongs to the SAICAR synthetase family.

The catalysed reaction is 5-amino-1-(5-phospho-D-ribosyl)imidazole-4-carboxylate + L-aspartate + ATP = (2S)-2-[5-amino-1-(5-phospho-beta-D-ribosyl)imidazole-4-carboxamido]succinate + ADP + phosphate + 2 H(+). It participates in purine metabolism; IMP biosynthesis via de novo pathway; 5-amino-1-(5-phospho-D-ribosyl)imidazole-4-carboxamide from 5-amino-1-(5-phospho-D-ribosyl)imidazole-4-carboxylate: step 1/2. The protein is Phosphoribosylaminoimidazole-succinocarboxamide synthase of Idiomarina loihiensis (strain ATCC BAA-735 / DSM 15497 / L2-TR).